The primary structure comprises 99 residues: Large ribosomal subunit protein bL21 (99 aa).

It belongs to the bacterial ribosomal protein bL21 family. Part of the 50S ribosomal subunit. Contacts protein L20.

Its function is as follows. This protein binds to 23S rRNA in the presence of protein L20. The protein is Large ribosomal subunit protein bL21 of Mesomycoplasma hyopneumoniae (strain 7448) (Mycoplasma hyopneumoniae).